The sequence spans 275 residues: Bis(5'-nucleosyl)-tetraphosphatase, symmetrical (275 aa).

Belongs to the Ap4A hydrolase family.

It catalyses the reaction P(1),P(4)-bis(5'-adenosyl) tetraphosphate + H2O = 2 ADP + 2 H(+). Its function is as follows. Hydrolyzes diadenosine 5',5'''-P1,P4-tetraphosphate to yield ADP. This Marinomonas sp. (strain MWYL1) protein is Bis(5'-nucleosyl)-tetraphosphatase, symmetrical.